The sequence spans 386 residues: S-adenosylmethionine synthase (386 aa).

Residue His16 participates in ATP binding. Mg(2+) is bound at residue Asp18. K(+) is bound at residue Glu44. 2 residues coordinate L-methionine: Glu57 and Gln100. A flexible loop region spans residues 100 to 110; the sequence is QSPDINQGVDR. Residues 164 to 166, 230 to 231, Asp239, 245 to 246, Ala262, and Lys266 contribute to the ATP site; these read DGK, KF, and RK. Asp239 is an L-methionine binding site. Residue Lys270 participates in L-methionine binding.

Belongs to the AdoMet synthase family. Homotetramer; dimer of dimers. It depends on Mg(2+) as a cofactor. The cofactor is K(+).

Its subcellular location is the cytoplasm. It catalyses the reaction L-methionine + ATP + H2O = S-adenosyl-L-methionine + phosphate + diphosphate. It functions in the pathway amino-acid biosynthesis; S-adenosyl-L-methionine biosynthesis; S-adenosyl-L-methionine from L-methionine: step 1/1. In terms of biological role, catalyzes the formation of S-adenosylmethionine (AdoMet) from methionine and ATP. The overall synthetic reaction is composed of two sequential steps, AdoMet formation and the subsequent tripolyphosphate hydrolysis which occurs prior to release of AdoMet from the enzyme. In Helicobacter hepaticus (strain ATCC 51449 / 3B1), this protein is S-adenosylmethionine synthase.